A 377-amino-acid polypeptide reads, in one-letter code: Trichodiene synthase (377 aa).

This sequence belongs to the trichodiene synthase family.

It carries out the reaction (2E,6E)-farnesyl diphosphate = trichodiene + diphosphate. Its pathway is sesquiterpene biosynthesis; trichothecene biosynthesis. Functionally, TS is a member of the terpene cyclase group of enzymes. It catalyzes the isomerization and cyclization of farnesyl pyro-phosphate to form trichodiene, the first cyclic intermediate in the biosynthetic pathway for trichothecenes. It serves to branch trichothecene biosynthesis from the isoprenoid pathway. In Fusarium poae, this protein is Trichodiene synthase (TRI5).